Reading from the N-terminus, the 322-residue chain is L-asparaginase (322 aa).

Residues 3 to 322 (KKVALITTGG…KEGIKDKFCY (320 aa)) form the Asparaginase/glutaminase domain. The O-isoaspartyl threonine intermediate role is filled by threonine 13. Substrate contacts are provided by residues serine 56 and 89-90 (TD).

It belongs to the asparaginase 1 family. As to quaternary structure, homotetramer.

The protein localises to the cytoplasm. It carries out the reaction L-asparagine + H2O = L-aspartate + NH4(+). This Bacillus licheniformis protein is L-asparaginase (ansA).